A 502-amino-acid chain; its full sequence is ATP synthase subunit alpha (502 aa).

169-176 contributes to the ATP binding site; sequence GDRQTGKT.

The protein belongs to the ATPase alpha/beta chains family. As to quaternary structure, F-type ATPases have 2 components, CF(1) - the catalytic core - and CF(0) - the membrane proton channel. CF(1) has five subunits: alpha(3), beta(3), gamma(1), delta(1), epsilon(1). CF(0) has three main subunits: a(1), b(2) and c(9-12). The alpha and beta chains form an alternating ring which encloses part of the gamma chain. CF(1) is attached to CF(0) by a central stalk formed by the gamma and epsilon chains, while a peripheral stalk is formed by the delta and b chains.

The protein localises to the cell inner membrane. The enzyme catalyses ATP + H2O + 4 H(+)(in) = ADP + phosphate + 5 H(+)(out). Its function is as follows. Produces ATP from ADP in the presence of a proton gradient across the membrane. The alpha chain is a regulatory subunit. This chain is ATP synthase subunit alpha, found in Nitratidesulfovibrio vulgaris (strain DSM 19637 / Miyazaki F) (Desulfovibrio vulgaris).